The primary structure comprises 576 residues: Sulfite reductase [NADPH] hemoprotein beta-component (576 aa).

[4Fe-4S] cluster is bound by residues C435, C441, C480, and C484. C484 contributes to the siroheme binding site.

It belongs to the nitrite and sulfite reductase 4Fe-4S domain family. As to quaternary structure, alpha(8)-beta(8). The alpha component is a flavoprotein, the beta component is a hemoprotein. Siroheme serves as cofactor. It depends on [4Fe-4S] cluster as a cofactor.

It carries out the reaction hydrogen sulfide + 3 NADP(+) + 3 H2O = sulfite + 3 NADPH + 4 H(+). It participates in sulfur metabolism; hydrogen sulfide biosynthesis; hydrogen sulfide from sulfite (NADPH route): step 1/1. In terms of biological role, component of the sulfite reductase complex that catalyzes the 6-electron reduction of sulfite to sulfide. This is one of several activities required for the biosynthesis of L-cysteine from sulfate. The protein is Sulfite reductase [NADPH] hemoprotein beta-component of Yersinia pestis bv. Antiqua (strain Antiqua).